We begin with the raw amino-acid sequence, 79 residues long: Neurotoxin 3FTx-LI (79 aa).

Positions 1 to 21 are cleaved as a signal peptide; it reads MKTLLLTLVVVTIVCLDLGYT. 4 cysteine pairs are disulfide-bonded: cysteine 24/cysteine 43, cysteine 36/cysteine 61, cysteine 65/cysteine 71, and cysteine 72/cysteine 77.

As to expression, expressed by the venom gland.

It is found in the secreted. Functionally, blocks both the muscle-twitch response to nerve stimulation and the response to exogenous acetylcholine. This Bungarus fasciatus (Banded krait) protein is Neurotoxin 3FTx-LI.